A 616-amino-acid polypeptide reads, in one-letter code: Dihydroxy-acid dehydratase (616 aa).

Asp-81 contacts Mg(2+). A [2Fe-2S] cluster-binding site is contributed by Cys-122. Mg(2+) contacts are provided by Asp-123 and Lys-124. Lys-124 carries the N6-carboxylysine modification. Cys-195 contributes to the [2Fe-2S] cluster binding site. A Mg(2+)-binding site is contributed by Glu-491. Ser-517 functions as the Proton acceptor in the catalytic mechanism.

It belongs to the IlvD/Edd family. As to quaternary structure, homodimer. [2Fe-2S] cluster serves as cofactor. Requires Mg(2+) as cofactor.

The enzyme catalyses (2R)-2,3-dihydroxy-3-methylbutanoate = 3-methyl-2-oxobutanoate + H2O. The catalysed reaction is (2R,3R)-2,3-dihydroxy-3-methylpentanoate = (S)-3-methyl-2-oxopentanoate + H2O. It functions in the pathway amino-acid biosynthesis; L-isoleucine biosynthesis; L-isoleucine from 2-oxobutanoate: step 3/4. It participates in amino-acid biosynthesis; L-valine biosynthesis; L-valine from pyruvate: step 3/4. Its function is as follows. Functions in the biosynthesis of branched-chain amino acids. Catalyzes the dehydration of (2R,3R)-2,3-dihydroxy-3-methylpentanoate (2,3-dihydroxy-3-methylvalerate) into 2-oxo-3-methylpentanoate (2-oxo-3-methylvalerate) and of (2R)-2,3-dihydroxy-3-methylbutanoate (2,3-dihydroxyisovalerate) into 2-oxo-3-methylbutanoate (2-oxoisovalerate), the penultimate precursor to L-isoleucine and L-valine, respectively. In Yersinia enterocolitica serotype O:8 / biotype 1B (strain NCTC 13174 / 8081), this protein is Dihydroxy-acid dehydratase.